Consider the following 236-residue polypeptide: 2-C-methyl-D-erythritol 4-phosphate cytidylyltransferase (236 aa).

It belongs to the IspD/TarI cytidylyltransferase family. IspD subfamily. Homodimer.

It carries out the reaction 2-C-methyl-D-erythritol 4-phosphate + CTP + H(+) = 4-CDP-2-C-methyl-D-erythritol + diphosphate. The protein operates within isoprenoid biosynthesis; isopentenyl diphosphate biosynthesis via DXP pathway; isopentenyl diphosphate from 1-deoxy-D-xylulose 5-phosphate: step 2/6. Its function is as follows. Catalyzes the formation of 4-diphosphocytidyl-2-C-methyl-D-erythritol from CTP and 2-C-methyl-D-erythritol 4-phosphate (MEP). In Salmonella paratyphi A (strain ATCC 9150 / SARB42), this protein is 2-C-methyl-D-erythritol 4-phosphate cytidylyltransferase.